The chain runs to 131 residues: C-type natriuretic peptide 1 (131 aa).

A signal peptide spans 1–22 (MLCPVLLCATLLLLTPFEVTEA). Residues 23–109 (RALHPSADAV…KRAEPDRSRR (87 aa)) constitute a propeptide that is removed on maturation. An intrachain disulfide couples cysteine 115 to cysteine 131.

This sequence belongs to the natriuretic peptide family. In terms of tissue distribution, brain and spinal cord.

The protein localises to the secreted. Its function is as follows. Exhibits natriuretic and vasodepressant activity. Has cGMP-stimulating activity. May help to regulate body fluid homeostasis in a variety of aquatic environments. The chain is C-type natriuretic peptide 1 from Oryzias latipes (Japanese rice fish).